The primary structure comprises 235 residues: Small ribosomal subunit protein eS4 (235 aa).

The region spanning 37–100 (LPLGIIIRDI…NEAYRMLQDE (64 aa)) is the S4 RNA-binding domain.

This sequence belongs to the eukaryotic ribosomal protein eS4 family.

This Methanosarcina acetivorans (strain ATCC 35395 / DSM 2834 / JCM 12185 / C2A) protein is Small ribosomal subunit protein eS4.